The following is a 162-amino-acid chain: NADH-quinone oxidoreductase subunit I (162 aa).

4Fe-4S ferredoxin-type domains lie at 52–82 and 93–122; these read LRRYPNGEERCIACKLCEAICPAQAITIEAG and TRYDIDMVKCIYCGFCQEACPVDAIVEGPN. The [4Fe-4S] cluster site is built by Cys62, Cys65, Cys68, Cys72, Cys102, Cys105, Cys108, and Cys112.

This sequence belongs to the complex I 23 kDa subunit family. NDH-1 is composed of 14 different subunits. Subunits NuoA, H, J, K, L, M, N constitute the membrane sector of the complex. The cofactor is [4Fe-4S] cluster.

Its subcellular location is the cell inner membrane. It carries out the reaction a quinone + NADH + 5 H(+)(in) = a quinol + NAD(+) + 4 H(+)(out). In terms of biological role, NDH-1 shuttles electrons from NADH, via FMN and iron-sulfur (Fe-S) centers, to quinones in the respiratory chain. The immediate electron acceptor for the enzyme in this species is believed to be ubiquinone. Couples the redox reaction to proton translocation (for every two electrons transferred, four hydrogen ions are translocated across the cytoplasmic membrane), and thus conserves the redox energy in a proton gradient. The protein is NADH-quinone oxidoreductase subunit I of Xanthobacter autotrophicus (strain ATCC BAA-1158 / Py2).